The primary structure comprises 217 residues: CASP-like protein UU4 (217 aa).

Residues 1 to 11 (MYTGQSDHRPE) are compositionally biased toward basic and acidic residues. Residues 1-21 (MYTGQSDHRPEGVGVNPGSPN) form a disordered region. Residues 1-61 (MYTGQSDHRP…VKKNINHMSG (61 aa)) lie on the Cytoplasmic side of the membrane. The chain crosses the membrane as a helical span at residues 62–82 (LSLGLRVSEFVLSVIAFSLMA). The Extracellular segment spans residues 83 to 98 (SAEQNGAVYSTFTSYS). The chain crosses the membrane as a helical span at residues 99–119 (FVLAINVLVALYAIGQIILSV). The Cytoplasmic segment spans residues 120-141 (MPLVSGSAPKKLYLFITFGCDQ). The chain crosses the membrane as a helical span at residues 142–162 (LSAFLLMAAGAAGASVAMLIN). The Extracellular portion of the chain corresponds to 163 to 187 (RKGVIDDYGSGCIDGKITVFCAHAE). The helical transmembrane segment at 188–208 (ASIAFTFLSFFCVMISSYLGV) threads the bilayer. Topologically, residues 209 to 217 (YNLAPYLIL) are cytoplasmic.

Belongs to the Casparian strip membrane proteins (CASP) family. Homodimer and heterodimers.

Its subcellular location is the cell membrane. The protein is CASP-like protein UU4 of Physcomitrium patens (Spreading-leaved earth moss).